The sequence spans 418 residues: Enolase (418 aa).

(2R)-2-phosphoglycerate is bound at residue glutamine 162. Residue glutamate 204 is the Proton donor of the active site. The Mg(2+) site is built by aspartate 241, glutamate 283, and aspartate 309. Lysine 334, arginine 363, serine 364, and lysine 385 together coordinate (2R)-2-phosphoglycerate. The active-site Proton acceptor is the lysine 334.

The protein belongs to the enolase family. It depends on Mg(2+) as a cofactor.

Its subcellular location is the cytoplasm. It localises to the secreted. The protein localises to the cell surface. It catalyses the reaction (2R)-2-phosphoglycerate = phosphoenolpyruvate + H2O. The protein operates within carbohydrate degradation; glycolysis; pyruvate from D-glyceraldehyde 3-phosphate: step 4/5. Its function is as follows. Catalyzes the reversible conversion of 2-phosphoglycerate (2-PG) into phosphoenolpyruvate (PEP). It is essential for the degradation of carbohydrates via glycolysis. This is Enolase from Pelagibacter ubique (strain HTCC1062).